A 522-amino-acid polypeptide reads, in one-letter code: Putative cysteine ligase BshC (522 aa).

The stretch at 436–469 forms a coiled coil; sequence SWAQAEKAKALKQLEDIEKKLRKAEERKHDDVIK.

This sequence belongs to the BshC family.

This chain is Putative cysteine ligase BshC, found in Cytophaga hutchinsonii (strain ATCC 33406 / DSM 1761 / CIP 103989 / NBRC 15051 / NCIMB 9469 / D465).